Consider the following 253-residue polypeptide: Phosphate import ATP-binding protein PstB (253 aa).

The ABC transporter domain maps to 7 to 248; it reads IDARDVNFWY…PEKEATQNYI (242 aa). ATP is bound at residue 39-46; that stretch reads GPSGCGKS.

The protein belongs to the ABC transporter superfamily. Phosphate importer (TC 3.A.1.7) family. In terms of assembly, the complex is composed of two ATP-binding proteins (PstB), two transmembrane proteins (PstC and PstA) and a solute-binding protein (PstS).

The protein resides in the cell inner membrane. It catalyses the reaction phosphate(out) + ATP + H2O = ADP + 2 phosphate(in) + H(+). In terms of biological role, part of the ABC transporter complex PstSACB involved in phosphate import. Responsible for energy coupling to the transport system. The protein is Phosphate import ATP-binding protein PstB of Bacteroides fragilis (strain ATCC 25285 / DSM 2151 / CCUG 4856 / JCM 11019 / LMG 10263 / NCTC 9343 / Onslow / VPI 2553 / EN-2).